The chain runs to 328 residues: Cytochrome f (328 aa).

An N-terminal signal peptide occupies residues 1-44 (MRTFNFLSFPQVHRQALVKAVLVAIATVSLLLTSDVINPQSAQA). 4 residues coordinate heme: tyrosine 45, cysteine 66, cysteine 69, and histidine 70. A helical membrane pass occupies residues 294 to 314 (IKGLVLFLGGIMLCQILLVIK).

The protein belongs to the cytochrome f family. In terms of assembly, the 4 large subunits of the cytochrome b6-f complex are cytochrome b6, subunit IV (17 kDa polypeptide, PetD), cytochrome f and the Rieske protein, while the 4 small subunits are PetG, PetL, PetM and PetN. The complex functions as a dimer. The cofactor is heme.

The protein localises to the cellular thylakoid membrane. Functionally, component of the cytochrome b6-f complex, which mediates electron transfer between photosystem II (PSII) and photosystem I (PSI), cyclic electron flow around PSI, and state transitions. This Microcystis aeruginosa (strain NIES-843 / IAM M-2473) protein is Cytochrome f.